The chain runs to 216 residues: MLDLFADAEPWQEPLAAGAVILRRFAFNAAEQLIRDINDVASQSPFRQMVTPGGYTMSVAMTNCGHLGWTTHRQGYLYSPIDPQTNKPWPAMPQSFHNLCQRAATAAGYPDFQPDACLINRYAPGAKLSLHQDKDEPDLRAPIVSVSLGLPAIFQFGGLKRNDPLKRLLLEHGDVVVWGGESRLFYHGIQPLKAGFHPLTIDCRYNLTFRQAGKKE.

Residues Trp-69 and 76–78 (YLY) each bind substrate. The Fe2OG dioxygenase domain occupies 113–213 (QPDACLINRY…RYNLTFRQAG (101 aa)). 120 to 122 (NRY) contacts 2-oxoglutarate. The Fe cation site is built by His-131 and Asp-133. The substrate site is built by Asp-135 and Arg-161. Fe cation is bound at residue His-187. Residue 204 to 210 (RYNLTFR) participates in 2-oxoglutarate binding.

This sequence belongs to the alkB family. It depends on Fe(2+) as a cofactor.

It catalyses the reaction a methylated nucleobase within DNA + 2-oxoglutarate + O2 = a nucleobase within DNA + formaldehyde + succinate + CO2. Dioxygenase that repairs alkylated DNA and RNA containing 3-methylcytosine or 1-methyladenine by oxidative demethylation. Has highest activity towards 3-methylcytosine. Has lower activity towards alkylated DNA containing ethenoadenine, and no detectable activity towards 1-methylguanine or 3-methylthymine. Accepts double-stranded and single-stranded substrates. Requires molecular oxygen, alpha-ketoglutarate and iron. Provides extensive resistance to alkylating agents such as MMS and DMS (SN2 agents), but not to MMNG and MNU (SN1 agents). This Escherichia coli (strain K12) protein is Alpha-ketoglutarate-dependent dioxygenase AlkB (alkB).